The following is a 296-amino-acid chain: Non-homologous end joining protein Ku (296 aa).

The region spanning 11–187 (TFGLVNIPVK…ELPEAGEPSS (177 aa)) is the Ku domain. Residues 254–296 (AAARRRGDEHEAPARGERRHAAAAAARTTGRPRAARASRKKRG) are disordered. Residues 258-273 (RRGDEHEAPARGERRH) are compositionally biased toward basic and acidic residues. Residues 275–285 (AAAAARTTGRP) are compositionally biased toward low complexity. Residues 286-296 (RAARASRKKRG) are compositionally biased toward basic residues.

Belongs to the prokaryotic Ku family. As to quaternary structure, homodimer. Interacts with LigD.

Its function is as follows. With LigD forms a non-homologous end joining (NHEJ) DNA repair enzyme, which repairs dsDNA breaks with reduced fidelity. Binds linear dsDNA with 5'- and 3'- overhangs but not closed circular dsDNA nor ssDNA. Recruits and stimulates the ligase activity of LigD. The polypeptide is Non-homologous end joining protein Ku (Anaeromyxobacter sp. (strain K)).